Reading from the N-terminus, the 268-residue chain is NAC transcription factor 29 (268 aa).

Residues 9–161 enclose the NAC domain; that stretch reads LPPGFRFHPT…EWVLCRIYKK (153 aa). Residues 106-167 mediate DNA binding; sequence VGVKKALVFY…IYKKRGASKL (62 aa).

In terms of tissue distribution, expressed in senescing leaves, petals and sepals.

Its subcellular location is the nucleus. Functionally, transcription activator that binds to, and transactivates the promoter of the abscisic aldehyde oxidase AAO3. Promotes chlorophyll degradation in leaves by enhancing transcription of AAO3, which leads to increased levels of the senescence-inducing hormone abscisic acid (ABA). Involved in the control of dehydration in senescing leaves. Binds to the DNA sequence 5'-CACGTAAGT-3' of SAG113 promoter. SAG113 acts as a negative regulator of ABA signaling for stomatal closure in leaves, and controls water loss during leaf senescence. Transcription factor of the NAC family involved in senescence. May function in the transition between active cell division and cell expansion. Required for normal seed development and morphology. The sequence is that of NAC transcription factor 29 (NAC029) from Arabidopsis thaliana (Mouse-ear cress).